A 311-amino-acid polypeptide reads, in one-letter code: Linearmycin resistance ATP-binding protein LnrL (311 aa).

The ABC transporter domain maps to 2-232; sequence LQAENIKKAY…LGGDTIIQLT (231 aa). 34–41 contacts ATP; the sequence is GPNGAGKS.

It belongs to the ABC transporter superfamily. The complex is composed of two ATP-binding proteins (LnrL) and two transmembrane proteins (LnrM and LnrN).

In terms of biological role, required for resistance to linearmycins, a family of antibiotic-specialized metabolites produced by some streptomycetes. Part of the ABC transporter complex LnrLMN that probably facilitates linearmycin removal from the membrane. Responsible for energy coupling to the transport system. Also mediates KinC-dependent biofilm morphology. This Bacillus subtilis (strain 168) protein is Linearmycin resistance ATP-binding protein LnrL.